Reading from the N-terminus, the 126-residue chain is Arginine decarboxylase proenzyme (126 aa).

S74 functions as the Schiff-base intermediate with substrate; via pyruvic acid in the catalytic mechanism. Residue S74 is modified to Pyruvic acid (Ser); by autocatalysis. The Proton acceptor; for processing activity role is filled by H79. C94 serves as the catalytic Proton donor; for catalytic activity.

This sequence belongs to the prokaryotic AdoMetDC family. Type 1 subfamily. In terms of assembly, heterooctamer of four alpha and four beta chains arranged as a tetramer of alpha/beta heterodimers. Requires pyruvate as cofactor. In terms of processing, is synthesized initially as an inactive proenzyme. Formation of the active enzyme involves a self-maturation process in which the active site pyruvoyl group is generated from an internal serine residue via an autocatalytic post-translational modification. Two non-identical subunits are generated from the proenzyme in this reaction, and the pyruvate is formed at the N-terminus of the alpha chain, which is derived from the carboxyl end of the proenzyme. The post-translation cleavage follows an unusual pathway, termed non-hydrolytic serinolysis, in which the side chain hydroxyl group of the serine supplies its oxygen atom to form the C-terminus of the beta chain, while the remainder of the serine residue undergoes an oxidative deamination to produce ammonia and the pyruvoyl group blocking the N-terminus of the alpha chain.

It carries out the reaction L-arginine + H(+) = agmatine + CO2. The protein operates within amine and polyamine biosynthesis; agmatine biosynthesis; agmatine from L-arginine: step 1/1. Specifically catalyzes the decarboxylation of L-arginine to agmatine. Has no S-adenosylmethionine decarboxylase (AdoMetDC) activity. The polypeptide is Arginine decarboxylase proenzyme (Pyrobaculum calidifontis (strain DSM 21063 / JCM 11548 / VA1)).